The primary structure comprises 201 residues: FMN-dependent NADH:quinone oxidoreductase (201 aa).

FMN contacts are provided by residues S9 and 93 to 96 (MYNF).

It belongs to the azoreductase type 1 family. As to quaternary structure, homodimer. Requires FMN as cofactor.

It catalyses the reaction 2 a quinone + NADH + H(+) = 2 a 1,4-benzosemiquinone + NAD(+). It carries out the reaction N,N-dimethyl-1,4-phenylenediamine + anthranilate + 2 NAD(+) = 2-(4-dimethylaminophenyl)diazenylbenzoate + 2 NADH + 2 H(+). In terms of biological role, quinone reductase that provides resistance to thiol-specific stress caused by electrophilic quinones. Also exhibits azoreductase activity. Catalyzes the reductive cleavage of the azo bond in aromatic azo compounds to the corresponding amines. The chain is FMN-dependent NADH:quinone oxidoreductase from Bradyrhizobium sp. (strain BTAi1 / ATCC BAA-1182).